A 157-amino-acid polypeptide reads, in one-letter code: Phosphopantetheine adenylyltransferase (157 aa).

Thr8 contributes to the substrate binding site. ATP-binding positions include 8 to 9 and His16; that span reads TF. 3 residues coordinate substrate: Lys40, Thr72, and Arg86. ATP contacts are provided by residues 87-89, Glu97, and 122-128; these read GLR and YSFLSSS.

It belongs to the bacterial CoaD family. Homohexamer. Requires Mg(2+) as cofactor.

The protein resides in the cytoplasm. The catalysed reaction is (R)-4'-phosphopantetheine + ATP + H(+) = 3'-dephospho-CoA + diphosphate. Its pathway is cofactor biosynthesis; coenzyme A biosynthesis; CoA from (R)-pantothenate: step 4/5. Its function is as follows. Reversibly transfers an adenylyl group from ATP to 4'-phosphopantetheine, yielding dephospho-CoA (dPCoA) and pyrophosphate. This is Phosphopantetheine adenylyltransferase from Prochlorococcus marinus (strain AS9601).